The sequence spans 220 residues: Octanoyltransferase (220 aa).

The region spanning 34 to 209 is the BPL/LPL catalytic domain; sequence ENSQDEIWVV…TLSQELGLAN (176 aa). Residues 73 to 80, 140 to 142, and 153 to 155 each bind substrate; these read RGGQVTYH, SLG, and GLA. Residue Cys171 is the Acyl-thioester intermediate of the active site.

The protein belongs to the LipB family.

It localises to the cytoplasm. The enzyme catalyses octanoyl-[ACP] + L-lysyl-[protein] = N(6)-octanoyl-L-lysyl-[protein] + holo-[ACP] + H(+). Its pathway is protein modification; protein lipoylation via endogenous pathway; protein N(6)-(lipoyl)lysine from octanoyl-[acyl-carrier-protein]: step 1/2. In terms of biological role, catalyzes the transfer of endogenously produced octanoic acid from octanoyl-acyl-carrier-protein onto the lipoyl domains of lipoate-dependent enzymes. Lipoyl-ACP can also act as a substrate although octanoyl-ACP is likely to be the physiological substrate. The sequence is that of Octanoyltransferase from Shewanella piezotolerans (strain WP3 / JCM 13877).